Consider the following 408-residue polypeptide: Acetate kinase (408 aa).

Asn7 contacts Mg(2+). Lys14 contacts ATP. Arg91 lines the substrate pocket. Residue Asp148 is the Proton donor/acceptor of the active site. ATP is bound by residues 208 to 212 (HLGNG), 283 to 285 (DFR), and 331 to 335 (GIGEN). Glu384 provides a ligand contact to Mg(2+).

The protein belongs to the acetokinase family. As to quaternary structure, homodimer. Mg(2+) is required as a cofactor. It depends on Mn(2+) as a cofactor.

It is found in the cytoplasm. It catalyses the reaction acetate + ATP = acetyl phosphate + ADP. Its pathway is metabolic intermediate biosynthesis; acetyl-CoA biosynthesis; acetyl-CoA from acetate: step 1/2. In terms of biological role, catalyzes the formation of acetyl phosphate from acetate and ATP. Can also catalyze the reverse reaction. This Methanosarcina acetivorans (strain ATCC 35395 / DSM 2834 / JCM 12185 / C2A) protein is Acetate kinase.